The following is an 806-amino-acid chain: Leucine--tRNA ligase (806 aa).

The 'HIGH' region signature appears at 40 to 51 (PYPSGAGLHVGH). The 'KMSKS' region signature appears at 578–582 (KMSKS). K581 is an ATP binding site.

This sequence belongs to the class-I aminoacyl-tRNA synthetase family.

It localises to the cytoplasm. The catalysed reaction is tRNA(Leu) + L-leucine + ATP = L-leucyl-tRNA(Leu) + AMP + diphosphate. The protein is Leucine--tRNA ligase of Staphylococcus aureus (strain MSSA476).